We begin with the raw amino-acid sequence, 435 residues long: MSDPNANEAEKNIEIWKVKKLIKRLEAARGNGTSMISLIIPPKDQISRAAKMLAEEYGTASNIKSRVNRQSVLSAITSTQQRLKLYNKVPPNGLVVYCGEILTSEGKERKVNIDFEPFKPINTSLYLCDNKFHTEALAELLESDQKFGFIVMDGNGALFGTLSGNTRDIVHKFSVDLPKKHGRGGQSALRFARLREEKRHNYVRKVAELAVQNFITNDKVNVMGIVLAGSADFKNDLNASDMFDQRLATKVIKVVDVSYGGENGFNQAIELASETLGNVKFIQEKKLIGKYFEEISQDTGRICYGVEDTLKALELGAVETLIVFENLEVTRWVLKDSNGAEIIIHSTKQQDAANRDRFMDKETGQEMEVVSQESFLEWIAEHYKDFGTTLEFVSDRSTEGNQFVKGFGGIGGILRYKVNFEQLNEVDDDDEYYDD.

This sequence belongs to the eukaryotic release factor 1 family. Heterodimer of two subunits, one of which binds GTP.

The protein localises to the cytoplasm. Directs the termination of nascent peptide synthesis (translation) in response to the termination codons UAA, UAG and UGA. The polypeptide is Eukaryotic peptide chain release factor subunit 1 (SU2) (Podospora anserina (Pleurage anserina)).